The sequence spans 616 residues: Dihydroxy-acid dehydratase (616 aa).

Mg(2+) is bound at residue Asp81. A [2Fe-2S] cluster-binding site is contributed by Cys122. Mg(2+)-binding residues include Asp123 and Lys124. N6-carboxylysine is present on Lys124. A [2Fe-2S] cluster-binding site is contributed by Cys195. Residue Glu491 coordinates Mg(2+). Residue Ser517 is the Proton acceptor of the active site.

Belongs to the IlvD/Edd family. Homodimer. The cofactor is [2Fe-2S] cluster. It depends on Mg(2+) as a cofactor.

It catalyses the reaction (2R)-2,3-dihydroxy-3-methylbutanoate = 3-methyl-2-oxobutanoate + H2O. It carries out the reaction (2R,3R)-2,3-dihydroxy-3-methylpentanoate = (S)-3-methyl-2-oxopentanoate + H2O. It participates in amino-acid biosynthesis; L-isoleucine biosynthesis; L-isoleucine from 2-oxobutanoate: step 3/4. The protein operates within amino-acid biosynthesis; L-valine biosynthesis; L-valine from pyruvate: step 3/4. Functions in the biosynthesis of branched-chain amino acids. Catalyzes the dehydration of (2R,3R)-2,3-dihydroxy-3-methylpentanoate (2,3-dihydroxy-3-methylvalerate) into 2-oxo-3-methylpentanoate (2-oxo-3-methylvalerate) and of (2R)-2,3-dihydroxy-3-methylbutanoate (2,3-dihydroxyisovalerate) into 2-oxo-3-methylbutanoate (2-oxoisovalerate), the penultimate precursor to L-isoleucine and L-valine, respectively. The sequence is that of Dihydroxy-acid dehydratase from Shigella boydii serotype 4 (strain Sb227).